Reading from the N-terminus, the 504-residue chain is Glutamate--tRNA ligase (504 aa).

A 'HIGH' region motif is present at residues 27–37 (PSPTGTPHVGL). Positions 271-275 (KLSKR) match the 'KMSKS' region motif. Lys274 contacts ATP.

The protein belongs to the class-I aminoacyl-tRNA synthetase family. Glutamate--tRNA ligase type 1 subfamily. In terms of assembly, monomer.

It localises to the cytoplasm. The enzyme catalyses tRNA(Glu) + L-glutamate + ATP = L-glutamyl-tRNA(Glu) + AMP + diphosphate. In terms of biological role, catalyzes the attachment of glutamate to tRNA(Glu) in a two-step reaction: glutamate is first activated by ATP to form Glu-AMP and then transferred to the acceptor end of tRNA(Glu). In Arthrobacter sp. (strain FB24), this protein is Glutamate--tRNA ligase.